We begin with the raw amino-acid sequence, 692 residues long: Elongation factor G (692 aa).

One can recognise a tr-type G domain in the interval N8–T283. GTP is bound by residues A17–T24, D81–H85, and N135–D138.

The protein belongs to the TRAFAC class translation factor GTPase superfamily. Classic translation factor GTPase family. EF-G/EF-2 subfamily.

It localises to the cytoplasm. Catalyzes the GTP-dependent ribosomal translocation step during translation elongation. During this step, the ribosome changes from the pre-translocational (PRE) to the post-translocational (POST) state as the newly formed A-site-bound peptidyl-tRNA and P-site-bound deacylated tRNA move to the P and E sites, respectively. Catalyzes the coordinated movement of the two tRNA molecules, the mRNA and conformational changes in the ribosome. The sequence is that of Elongation factor G from Helicobacter pylori (strain HPAG1).